A 188-amino-acid polypeptide reads, in one-letter code: Probable chemoreceptor glutamine deamidase CheD (188 aa).

It belongs to the CheD family.

The enzyme catalyses L-glutaminyl-[protein] + H2O = L-glutamyl-[protein] + NH4(+). In terms of biological role, probably deamidates glutamine residues to glutamate on methyl-accepting chemotaxis receptors (MCPs), playing an important role in chemotaxis. This Caulobacter sp. (strain K31) protein is Probable chemoreceptor glutamine deamidase CheD.